A 1067-amino-acid chain; its full sequence is TBC1 domain family member 31 (1067 aa).

WD repeat units follow at residues 36–75 (GKVV…FRLV), 76–119 (LKTG…SWMR), 120–161 (GHEG…KLNI), 162–201 (RQSV…CKYQ), 202–249 (LPLP…RVIQ), and 250–288 (MPSQ…RFIN). Residues 419 to 594 (EYPAKYRMFV…RLFDNIFSNH (176 aa)) form the Rab-GAP TBC domain. Residues 724 to 773 (QQELLQKAEEQRKHVLEQEEEKLTQQRAKLAAMKRELKVKELQLLDATRR) adopt a coiled-coil conformation. Basic and acidic residues-rich tracts occupy residues 896 to 912 (KADA…EELQ) and 926 to 937 (MREEAHRKKDEA). Disordered stretches follow at residues 896-955 (KADA…HSDG) and 1045-1067 (AARA…PVSP). 2 stretches are compositionally biased toward polar residues: residues 941 to 953 (IQES…STHS) and 1052 to 1067 (SSAS…PVSP).

Its subcellular location is the cytoplasm. The protein localises to the cytoskeleton. The protein resides in the microtubule organizing center. It is found in the centrosome. It localises to the centriolar satellite. Its subcellular location is the cilium basal body. Its function is as follows. Molecular adapter which is involved in cilium biogenesis. Part of a functional complex including OFD1 a centriolar protein involved in cilium assembly. Could regulate the cAMP-dependent phosphorylation of OFD1, and its subsequent ubiquitination by PJA2 which ultimately leads to its proteasomal degradation. In Oryzias latipes (Japanese rice fish), this protein is TBC1 domain family member 31.